Here is a 379-residue protein sequence, read N- to C-terminus: UDP-4-amino-4-deoxy-L-arabinose--oxoglutarate aminotransferase (379 aa).

An N6-(pyridoxal phosphate)lysine modification is found at Lys-182.

Belongs to the DegT/DnrJ/EryC1 family. ArnB subfamily. As to quaternary structure, homodimer. It depends on pyridoxal 5'-phosphate as a cofactor.

The catalysed reaction is UDP-4-amino-4-deoxy-beta-L-arabinose + 2-oxoglutarate = UDP-beta-L-threo-pentopyranos-4-ulose + L-glutamate. It participates in nucleotide-sugar biosynthesis; UDP-4-deoxy-4-formamido-beta-L-arabinose biosynthesis; UDP-4-deoxy-4-formamido-beta-L-arabinose from UDP-alpha-D-glucuronate: step 2/3. Its pathway is bacterial outer membrane biogenesis; lipopolysaccharide biosynthesis. Catalyzes the conversion of UDP-4-keto-arabinose (UDP-Ara4O) to UDP-4-amino-4-deoxy-L-arabinose (UDP-L-Ara4N). The modified arabinose is attached to lipid A and is required for resistance to polymyxin and cationic antimicrobial peptides. The protein is UDP-4-amino-4-deoxy-L-arabinose--oxoglutarate aminotransferase of Shigella boydii serotype 4 (strain Sb227).